Reading from the N-terminus, the 421-residue chain is MLPTNRNRPQQRPARSWYFISDMDFSDPKRKPRYLSKILMVALLTAMCVVMLTQPPCHRRTPSVFSIHEPGVTHVLVTGGAGYIGSHAALRLLKDSFRVTIVDNLSRGNMGAIKVLQNLFSEPGRLQFIYADLGDPKAVNRIFAENAFDAVMHFAAVAYVGESTLEPLRYYHNITSNTLVVLEAMAAHNVRTLIYSSTCATYGEPEKMPITEGTPQFPINPYGKAKKMAEDIILDFSKSKKADMAVMILRYFNVIGSDPEGRLGEAPKPELREHGRISGACFDAALGIIPGLKVKGTDYETPDGTCVRDYIDVTDLVDAHVKALNKAERGKVGIYNVGTGKGRSVKEFVEACKKATGVDIKVDYFPRRPGDYAEVYSDPAKINSELNWTAQHTDLLESLRVAWTWQKKHRSGYGPPQAMVL.

Residues 1 to 33 (MLPTNRNRPQQRPARSWYFISDMDFSDPKRKPR) lie on the Cytoplasmic side of the membrane. The helical; Signal-anchor for type II membrane protein transmembrane segment at 34–53 (YLSKILMVALLTAMCVVMLT) threads the bilayer. Residues 54 to 421 (QPPCHRRTPS…GYGPPQAMVL (368 aa)) are Lumenal-facing. 74–105 (HVLVTGGAGYIGSHAALRLLKDSFRVTIVDNL) serves as a coordination point for NAD(+). Y222 serves as the catalytic Proton acceptor.

The protein belongs to the NAD(P)-dependent epimerase/dehydratase family. It depends on NAD(+) as a cofactor.

The protein resides in the golgi apparatus. It localises to the golgi stack membrane. It catalyses the reaction UDP-beta-L-arabinopyranose = UDP-alpha-D-xylose. Its pathway is nucleotide-sugar biosynthesis; UDP-L-arabinose biosynthesis; UDP-L-arabinose from UDP-alpha-D-xylose: step 1/1. It participates in cell wall biogenesis; cell wall polysaccharide biosynthesis. In Oryza sativa subsp. japonica (Rice), this protein is Probable UDP-arabinose 4-epimerase 1 (UEL-1).